The following is a 615-amino-acid chain: Chaperone protein HscA (615 aa).

It belongs to the heat shock protein 70 family.

In terms of biological role, chaperone involved in the maturation of iron-sulfur cluster-containing proteins. Has a low intrinsic ATPase activity which is markedly stimulated by HscB. Involved in the maturation of IscU. The chain is Chaperone protein HscA from Xenorhabdus nematophila (strain ATCC 19061 / DSM 3370 / CCUG 14189 / LMG 1036 / NCIMB 9965 / AN6).